The following is a 158-amino-acid chain: NADPH-dependent 7-cyano-7-deazaguanine reductase (158 aa).

C56 acts as the Thioimide intermediate in catalysis. D63 serves as the catalytic Proton donor. Substrate is bound by residues 78–80 (VES) and 97–98 (HE).

This sequence belongs to the GTP cyclohydrolase I family. QueF type 1 subfamily.

It is found in the cytoplasm. It catalyses the reaction 7-aminomethyl-7-carbaguanine + 2 NADP(+) = 7-cyano-7-deazaguanine + 2 NADPH + 3 H(+). It participates in tRNA modification; tRNA-queuosine biosynthesis. In terms of biological role, catalyzes the NADPH-dependent reduction of 7-cyano-7-deazaguanine (preQ0) to 7-aminomethyl-7-deazaguanine (preQ1). In Rhodopseudomonas palustris (strain BisB5), this protein is NADPH-dependent 7-cyano-7-deazaguanine reductase.